The chain runs to 499 residues: Neuropeptide CCHamide-1 receptor (499 aa).

Residues 1-85 are Extracellular-facing; the sequence is MIANLVSMET…GRRPETYIVP (85 aa). Residues asparagine 33 and asparagine 61 are each glycosylated (N-linked (GlcNAc...) asparagine). The chain crosses the membrane as a helical span at residues 86–106; the sequence is ILFALIFVVGVLGNGTLIVVF. Residues 107–117 lie on the Cytoplasmic side of the membrane; the sequence is LSVRQMRNVPN. The helical transmembrane segment at 118–138 threads the bilayer; sequence TYILSLALADLLVIITTVPLA. Topologically, residues 139 to 162 are extracellular; the sequence is STVYTVEYWPYGSFLCSLSEFMKD. The cysteines at positions 154 and 240 are disulfide-linked. The helical transmembrane segment at 163–183 threads the bilayer; the sequence is VSIGVSVFTLTALSGDRYFAI. Topologically, residues 184-203 are cytoplasmic; that stretch reads VDPLRKFHAHGGGRRATRMT. A helical transmembrane segment spans residues 204–224; the sequence is LATAVSIWLLAILCGLPALIG. Topologically, residues 225–259 are extracellular; the sequence is SNLKHLGINEKSIVICYPYPEEWGINYAKSMVLLH. Residues 260-280 traverse the membrane as a helical segment; that stretch reads FLVYYAIPLVVIAVFYVLIAL. Residues 281 to 309 lie on the Cytoplasmic side of the membrane; sequence HLMYSASVPGEIQGAVRQVRARRKVAVTV. A helical membrane pass occupies residues 310–330; sequence LAFVVIFGICFLPYHVFFLWF. Residues 331 to 348 are Extracellular-facing; sequence YFWPTAQDDYNAFWHVLR. A helical membrane pass occupies residues 349–369; the sequence is IVAYCMSFANSCANPVALYFV. The Cytoplasmic segment spans residues 370 to 499; the sequence is SGAFRKHFNR…PAKFQESLLN (130 aa).

It belongs to the G-protein coupled receptor 1 family. As to expression, low levels in larval brain and gut with higher levels in adult brain and gut. In the brain expression is widely distributed, including strong expression in the mushroom bodies. Expressed weakly in s-LNv (small ventral lateral neurons) and strongly in l-LNv (large ventral lateral neurons), but not in other clock neurons.

It is found in the cell membrane. Its function is as follows. Receptor for the neuropeptide CCHamide-1. Plays a role in the modulation of starvation-induced olfactory behavior where starved flies show increased responsiveness to food odorants, repellants and pheromones. Contributes to regulation of sleep latency (the time required to fall asleep), amount of sleep and depth of sleep (arousability). Involved in modulation of PDP1 and PDF levels in s-LNv (small ventral lateral neurons) clock neurons in response to CCHa1 released by DN1a (anterior dorsal neurons 1) clock neurons, to regulate morning activity. In a subset of dopaminergic cells in the protocerebral anterior medial (PAM) cluster involved in suppressing arousability in response to CCHa1 secreted by gut enteroendocrine cells. The sequence is that of Neuropeptide CCHamide-1 receptor from Drosophila melanogaster (Fruit fly).